A 317-amino-acid polypeptide reads, in one-letter code: Protoheme IX farnesyltransferase (317 aa).

A run of 9 helical transmembrane segments spans residues 28-48 (IIPL…HGHI), 53-73 (LLIT…LNCI), 101-121 (LIFA…FVNL), 122-142 (LSAC…THWL), 150-170 (IVIG…AVTG), 178-198 (ILFA…ALMI), 223-243 (IWIY…PFQA), 246-266 (LFYA…AWEL), and 282-302 (YSIL…LPAV).

This sequence belongs to the UbiA prenyltransferase family. Protoheme IX farnesyltransferase subfamily.

The protein resides in the cell inner membrane. The enzyme catalyses heme b + (2E,6E)-farnesyl diphosphate + H2O = Fe(II)-heme o + diphosphate. Its pathway is porphyrin-containing compound metabolism; heme O biosynthesis; heme O from protoheme: step 1/1. Functionally, converts heme B (protoheme IX) to heme O by substitution of the vinyl group on carbon 2 of heme B porphyrin ring with a hydroxyethyl farnesyl side group. The protein is Protoheme IX farnesyltransferase of Picosynechococcus sp. (strain ATCC 27264 / PCC 7002 / PR-6) (Agmenellum quadruplicatum).